Here is a 259-residue protein sequence, read N- to C-terminus: Phosphatidylglycerol--prolipoprotein diacylglyceryl transferase (259 aa).

Transmembrane regions (helical) follow at residues 9–29 (IIFS…VVGI), 55–75 (FITY…VLLY), 92–112 (EGGM…YLFC), and 117–137 (INFL…LFLG). An a 1,2-diacyl-sn-glycero-3-phospho-(1'-sn-glycerol)-binding site is contributed by Arg-138. Transmembrane regions (helical) follow at residues 172–192 (QLYE…YATF), 201–221 (GLNS…IEIF), and 228–248 (IGFI…MLLL).

The protein belongs to the Lgt family.

It is found in the cell inner membrane. The enzyme catalyses L-cysteinyl-[prolipoprotein] + a 1,2-diacyl-sn-glycero-3-phospho-(1'-sn-glycerol) = an S-1,2-diacyl-sn-glyceryl-L-cysteinyl-[prolipoprotein] + sn-glycerol 1-phosphate + H(+). Its pathway is protein modification; lipoprotein biosynthesis (diacylglyceryl transfer). Catalyzes the transfer of the diacylglyceryl group from phosphatidylglycerol to the sulfhydryl group of the N-terminal cysteine of a prolipoprotein, the first step in the formation of mature lipoproteins. The sequence is that of Phosphatidylglycerol--prolipoprotein diacylglyceryl transferase from Rickettsia felis (strain ATCC VR-1525 / URRWXCal2) (Rickettsia azadi).